We begin with the raw amino-acid sequence, 91 residues long: Acylphosphatase (91 aa).

An Acylphosphatase-like domain is found at 3 to 91 (CLRAIVKGKV…ANYSDFRIKH (89 aa)). Catalysis depends on residues Arg-18 and Asn-36.

This sequence belongs to the acylphosphatase family.

The enzyme catalyses an acyl phosphate + H2O = a carboxylate + phosphate + H(+). This is Acylphosphatase (acyP) from Dehalococcoides mccartyi (strain CBDB1).